The chain runs to 315 residues: Prephenate dehydratase (315 aa).

One can recognise a Prephenate dehydratase domain in the interval arginine 3–valine 189. The ACT domain maps to serine 203–proline 280.

Homodimer.

The enzyme catalyses prephenate + H(+) = 3-phenylpyruvate + CO2 + H2O. Its pathway is amino-acid biosynthesis; L-phenylalanine biosynthesis; phenylpyruvate from prephenate: step 1/1. The chain is Prephenate dehydratase (pheA) from Mycobacterium marinum (strain ATCC BAA-535 / M).